The chain runs to 238 residues: Ribonuclease PH (238 aa).

Residues R86 and 124–126 (GTR) contribute to the phosphate site.

This sequence belongs to the RNase PH family. Homohexameric ring arranged as a trimer of dimers.

It catalyses the reaction tRNA(n+1) + phosphate = tRNA(n) + a ribonucleoside 5'-diphosphate. Functionally, phosphorolytic 3'-5' exoribonuclease that plays an important role in tRNA 3'-end maturation. Removes nucleotide residues following the 3'-CCA terminus of tRNAs; can also add nucleotides to the ends of RNA molecules by using nucleoside diphosphates as substrates, but this may not be physiologically important. Probably plays a role in initiation of 16S rRNA degradation (leading to ribosome degradation) during starvation. This chain is Ribonuclease PH, found in Hahella chejuensis (strain KCTC 2396).